Reading from the N-terminus, the 704-residue chain is DNA ligase (704 aa).

Residues 43–47, 92–93, and Glu-124 contribute to the NAD(+) site; these read DADYD and SL. The active-site N6-AMP-lysine intermediate is the Lys-126. Residues Arg-147, Glu-182, Lys-298, and Lys-322 each contribute to the NAD(+) site. Positions 427, 430, 445, and 451 each coordinate Zn(2+). The 80-residue stretch at 625-704 folds into the BRCT domain; it reads PVASPVAGRI…DGWLRLIGDA (80 aa).

The protein belongs to the NAD-dependent DNA ligase family. LigA subfamily. The cofactor is Mg(2+). It depends on Mn(2+) as a cofactor.

The enzyme catalyses NAD(+) + (deoxyribonucleotide)n-3'-hydroxyl + 5'-phospho-(deoxyribonucleotide)m = (deoxyribonucleotide)n+m + AMP + beta-nicotinamide D-nucleotide.. In terms of biological role, DNA ligase that catalyzes the formation of phosphodiester linkages between 5'-phosphoryl and 3'-hydroxyl groups in double-stranded DNA using NAD as a coenzyme and as the energy source for the reaction. It is essential for DNA replication and repair of damaged DNA. The protein is DNA ligase of Cereibacter sphaeroides (strain KD131 / KCTC 12085) (Rhodobacter sphaeroides).